The chain runs to 84 residues: uncharacterized protein (84 aa).

This is an uncharacterized protein from Saccharomyces cerevisiae (strain ATCC 204508 / S288c) (Baker's yeast).